The chain runs to 394 residues: Lipase 3 (394 aa).

Positions 1–20 (MTRGALKVTILLVGLGLVLA) are cleaved as a signal peptide. A glycan (N-linked (GlcNAc...) asparagine) is linked at Asn-131. Active-site charge relay system residues include Ser-164 and His-369.

This sequence belongs to the AB hydrolase superfamily. Lipase family. In terms of tissue distribution, fat body.

The chain is Lipase 3 (Lip3) from Drosophila melanogaster (Fruit fly).